Consider the following 429-residue polypeptide: BURP domain-containing protein 3 (429 aa).

The signal sequence occupies residues 1 to 21 (MDRLLACLLGFLLIASVGSHA). Residues 59–81 (GGGVHVDAGHGKPGGTTVDVGKG) form a disordered region. The 216-residue stretch at 213-428 (FFLEKDLHPG…PQDHVVWTRS (216 aa)) folds into the BURP domain.

Expressed in stems, leaves, shoot, panicles and stamen.

The sequence is that of BURP domain-containing protein 3 (BURP3) from Oryza sativa subsp. japonica (Rice).